Here is a 506-residue protein sequence, read N- to C-terminus: Histidine ammonia-lyase (506 aa).

Positions 143-145 (ASG) form a cross-link, 5-imidazolinone (Ala-Gly). 2,3-didehydroalanine (Ser) is present on serine 144.

Belongs to the PAL/histidase family. Contains an active site 4-methylidene-imidazol-5-one (MIO), which is formed autocatalytically by cyclization and dehydration of residues Ala-Ser-Gly.

The protein resides in the cytoplasm. It catalyses the reaction L-histidine = trans-urocanate + NH4(+). Its pathway is amino-acid degradation; L-histidine degradation into L-glutamate; N-formimidoyl-L-glutamate from L-histidine: step 1/3. This is Histidine ammonia-lyase from Salmonella paratyphi A (strain ATCC 9150 / SARB42).